We begin with the raw amino-acid sequence, 396 residues long: Elongation factor Tu (396 aa).

A tr-type G domain is found at 10–206 (KPHINVGTIG…ALDSYIPEPQ (197 aa)). Positions 19–26 (GHVDHGKT) are G1. 19–26 (GHVDHGKT) serves as a coordination point for GTP. Thr26 is a binding site for Mg(2+). The segment at 60–64 (GITIN) is G2. Positions 81–84 (DCPG) are G3. GTP-binding positions include 81-85 (DCPGH) and 136-139 (NKAD). The G4 stretch occupies residues 136-139 (NKAD). The interval 174 to 176 (SAL) is G5.

Belongs to the TRAFAC class translation factor GTPase superfamily. Classic translation factor GTPase family. EF-Tu/EF-1A subfamily. As to quaternary structure, monomer.

The protein localises to the cytoplasm. The catalysed reaction is GTP + H2O = GDP + phosphate + H(+). In terms of biological role, GTP hydrolase that promotes the GTP-dependent binding of aminoacyl-tRNA to the A-site of ribosomes during protein biosynthesis. The chain is Elongation factor Tu from Nitrosospira multiformis (strain ATCC 25196 / NCIMB 11849 / C 71).